The primary structure comprises 887 residues: Bifunctional uridylyltransferase/uridylyl-removing enzyme (887 aa).

Residues 1 to 337 (MINTSPLLNY…RLPNYERKIE (337 aa)) are uridylyltransferase. Positions 339–699 (VNDHFKIVDN…AHRKAAQDAV (361 aa)) are uridylyl-removing. The HD domain maps to 457–579 (VDAHTLLLLR…LGDMEHLDYL (123 aa)). 2 ACT domains span residues 700 to 782 (QIFI…LMQR) and 809 to 887 (MVEI…ICQH).

The protein belongs to the GlnD family. Mg(2+) serves as cofactor.

The enzyme catalyses [protein-PII]-L-tyrosine + UTP = [protein-PII]-uridylyl-L-tyrosine + diphosphate. It catalyses the reaction [protein-PII]-uridylyl-L-tyrosine + H2O = [protein-PII]-L-tyrosine + UMP + H(+). With respect to regulation, uridylyltransferase (UTase) activity is inhibited by glutamine, while glutamine activates uridylyl-removing (UR) activity. Its function is as follows. Modifies, by uridylylation and deuridylylation, the PII regulatory proteins (GlnB and homologs), in response to the nitrogen status of the cell that GlnD senses through the glutamine level. Under low glutamine levels, catalyzes the conversion of the PII proteins and UTP to PII-UMP and PPi, while under higher glutamine levels, GlnD hydrolyzes PII-UMP to PII and UMP (deuridylylation). Thus, controls uridylylation state and activity of the PII proteins, and plays an important role in the regulation of nitrogen assimilation and metabolism. This Acinetobacter baumannii (strain ATCC 17978 / DSM 105126 / CIP 53.77 / LMG 1025 / NCDC KC755 / 5377) protein is Bifunctional uridylyltransferase/uridylyl-removing enzyme.